Reading from the N-terminus, the 158-residue chain is Sporulation-delaying protein SdpA (158 aa).

It localises to the cytoplasm. In terms of biological role, required for the maturation of SdpC to SDP. Not required for SdpC signal peptide cleavage, secretion from the cell or disulfide bond formation. This chain is Sporulation-delaying protein SdpA, found in Bacillus subtilis (strain 168).